Consider the following 551-residue polypeptide: Small ribosomal subunit protein bS1 (551 aa).

S1 motif domains lie at 21–83 (GALV…LSRE), 101–167 (GEMV…VSRR), 188–256 (GQEI…LGMK), 273–343 (NSRV…LGIK), 360–430 (DEKI…LGIK), and 447–516 (DAVI…VSHK).

This sequence belongs to the bacterial ribosomal protein bS1 family.

In terms of biological role, binds mRNA; thus facilitating recognition of the initiation point. It is needed to translate mRNA with a short Shine-Dalgarno (SD) purine-rich sequence. The polypeptide is Small ribosomal subunit protein bS1 (rpsA) (Coxiella burnetii (strain RSA 493 / Nine Mile phase I)).